Consider the following 444-residue polypeptide: Exodeoxyribonuclease 7 large subunit (444 aa).

Belongs to the XseA family. As to quaternary structure, heterooligomer composed of large and small subunits.

It localises to the cytoplasm. The enzyme catalyses Exonucleolytic cleavage in either 5'- to 3'- or 3'- to 5'-direction to yield nucleoside 5'-phosphates.. In terms of biological role, bidirectionally degrades single-stranded DNA into large acid-insoluble oligonucleotides, which are then degraded further into small acid-soluble oligonucleotides. The sequence is that of Exodeoxyribonuclease 7 large subunit from Xylella fastidiosa (strain M23).